The primary structure comprises 249 residues: Acidic leucine-rich nuclear phosphoprotein 32 family member A (249 aa).

Residue threonine 15 is modified to Phosphothreonine. Serine 17 is subject to Phosphoserine. LRR repeat units lie at residues 18–38 (DVKE…EGLT), 43–64 (ELEF…PKLN), 65–87 (KLKK…AEKC), and 89–110 (NLTH…EPLK). An LRRCT domain is found at 123–161 (CEVTNLNDYRENVFKLLPQLTYLDGYDRDDKEAPDSDAE). The segment covering 147 to 156 (GYDRDDKEAP) has biased composition (basic and acidic residues). Positions 147 to 249 (GYDRDDKEAP…EPEDEGEDDD (103 aa)) are disordered. The interval 150–174 (RDDKEAPDSDAEGYVEGLDDEEEDE) is necessary for tumor-suppressive function. Residues 157 to 230 (DSDAEGYVEG…DEEDEEELGE (74 aa)) are compositionally biased toward acidic residues. A phosphoserine; by CK2 mark is found at serine 158 and serine 204. The interaction with E4F1 stretch occupies residues 165–249 (EGLDDEEEDE…EPEDEGEDDD (85 aa)).

It belongs to the ANP32 family. As to quaternary structure, component of the SET complex, composed of at least ANP32A, APEX1, HMGB2, NME1, SET and TREX1. Directly interacts with SET. Interacts with ATXN1/SCA1. Interacts with MAP1B. Interacts with ELAVL1. Part of the INHAT (inhibitor of histone acetyltransferases) complex. Interacts with E4F1. In terms of assembly, (Microbial infection) Interacts (via C-terminus) with influenza virus A protein PB2; this interaction promotes viral replication. (Microbial infection) Interacts (via C-terminus) with influenza virus B protein PB2; this interaction promotes viral replication. As to quaternary structure, (Microbial infection) Interacts (via C-terminus) with influenza virus C protein PB2; this interaction promotes viral replication by bridging viral replicase dimers together. In terms of processing, phosphorylated on serine residues, at least in part by casein kinase 2/CK2. The N-terminus is blocked. Post-translationally, some glutamate residues are glycylated by TTLL8. This modification occurs exclusively on glutamate residues and results in a glycine chain on the gamma-carboxyl group. Expressed in all tissues tested. Highly expressed in kidney and skeletal muscle, moderate levels of expression in brain, placenta and pancreas, and weakly expressed in lung. Found in all regions of the brain examined (amygdala, caudate nucleus, corpus callosum, hippocampus and thalamus), with highest levels in amygdala.

Its subcellular location is the nucleus. The protein resides in the cytoplasm. It localises to the endoplasmic reticulum. In terms of biological role, multifunctional protein that is involved in the regulation of many processes including tumor suppression, apoptosis, cell cycle progression or transcription. Promotes apoptosis by favouring the activation of caspase-9/CASP9 and allowing apoptosome formation. In addition, plays a role in the modulation of histone acetylation and transcription as part of the INHAT (inhibitor of histone acetyltransferases) complex. Inhibits the histone-acetyltranferase activity of EP300/CREBBP (CREB-binding protein) and EP300/CREBBP-associated factor by histone masking. Preferentially binds to unmodified histone H3 and sterically inhibiting its acetylation and phosphorylation leading to cell growth inhibition. Participates in other biochemical processes such as regulation of mRNA nuclear-to-cytoplasmic translocation and stability by its association with ELAVL1 (Hu-antigen R). Plays a role in E4F1-mediated transcriptional repression as well as inhibition of protein phosphatase 2A. Functionally, (Microbial infection) Plays an essential role in influenza A, B and C viral genome replication. Mechanistically, mediates the assembly of the viral replicase asymmetric dimers composed of PB1, PB2 and PA via its N-terminal region. Also plays an essential role in foamy virus mRNA export from the nucleus. The sequence is that of Acidic leucine-rich nuclear phosphoprotein 32 family member A (ANP32A) from Homo sapiens (Human).